Consider the following 227-residue polypeptide: MSLSIFKDLPEEHPRHLIPSLCRQFYHLGWVTGTGGGMSIKHNDEIYIAPSGVQKERMQPEDLFVQDITGKDLQLPPEIRGLKKSQCTPLFMLAYQHRGAGAVIHTHSQHAVMATLLWPGKTFRCTHLEMIKGVYDEADKRYLRYDEELVVPIIENTPFERDLADSMYAAMMEYPGCSAILVRRHGVYVWGQTWEKAKTMSECYDYLFSIAVEMKKAGIDPEKFEST.

Cys-87 contributes to the substrate binding site. The Zn(2+) site is built by His-105 and His-107. Glu-129 functions as the Proton donor/acceptor in the catalytic mechanism. A Zn(2+)-binding site is contributed by His-185.

Belongs to the aldolase class II family. MtnB subfamily. The cofactor is Zn(2+).

It is found in the cytoplasm. The catalysed reaction is 5-(methylsulfanyl)-D-ribulose 1-phosphate = 5-methylsulfanyl-2,3-dioxopentyl phosphate + H2O. Its pathway is amino-acid biosynthesis; L-methionine biosynthesis via salvage pathway; L-methionine from S-methyl-5-thio-alpha-D-ribose 1-phosphate: step 2/6. Catalyzes the dehydration of methylthioribulose-1-phosphate (MTRu-1-P) into 2,3-diketo-5-methylthiopentyl-1-phosphate (DK-MTP-1-P). The polypeptide is Probable methylthioribulose-1-phosphate dehydratase (Drosophila ananassae (Fruit fly)).